A 61-amino-acid polypeptide reads, in one-letter code: MESRLLDTLVCPVCKGRLDFDRARAELLCRADRLAYPVRDGIPVMLESEARQLDAAPADTA.

Belongs to the UPF0434 family.

The protein is UPF0434 protein Bpet2671 of Bordetella petrii (strain ATCC BAA-461 / DSM 12804 / CCUG 43448).